A 204-amino-acid polypeptide reads, in one-letter code: MSKIQIVFYSMYGHIHTMAEAVADGVRSVGGCSAELLQVPELISEEVLEKYGAKAARAAFAHIPTATVERLAEADAIIFGTPTRFGNMAAQMRNFLDQTGKLWLSGGLVGKVGSVFASTATQHGGQETTITSFHSTLLHHGMIIVGVPYTEQRLLTMDEISGGSPYGATTLAGGDGSRRPSENELAIARFQGAHVAKITARLTA.

Residues 4-195 (IQIVFYSMYG…AIARFQGAHV (192 aa)) enclose the Flavodoxin-like domain. Residues 10–15 (SMYGHI) and 83–85 (TRF) each bind FMN. Tyr12 lines the NAD(+) pocket. Trp103 contributes to the substrate binding site. Residues 118-124 (STATQHG) and His139 each bind FMN.

Belongs to the WrbA family. The cofactor is FMN.

It catalyses the reaction a quinone + NADH + H(+) = a quinol + NAD(+). The catalysed reaction is a quinone + NADPH + H(+) = a quinol + NADP(+). The chain is NAD(P)H dehydrogenase (quinone) from Trichlorobacter lovleyi (strain ATCC BAA-1151 / DSM 17278 / SZ) (Geobacter lovleyi).